Reading from the N-terminus, the 540-residue chain is Methionine--tRNA ligase 1 (540 aa).

Residues 10-20 (PYANGSLHLGH) carry the 'HIGH' region motif. Zn(2+) is bound by residues C141, C144, C153, and C156. The 'KMSKS' region motif lies at 327-331 (KISTS). An ATP-binding site is contributed by T330.

Belongs to the class-I aminoacyl-tRNA synthetase family. MetG type 1 subfamily. Monomer. The cofactor is Zn(2+).

It is found in the cytoplasm. The enzyme catalyses tRNA(Met) + L-methionine + ATP = L-methionyl-tRNA(Met) + AMP + diphosphate. In terms of biological role, is required not only for elongation of protein synthesis but also for the initiation of all mRNA translation through initiator tRNA(fMet) aminoacylation. The chain is Methionine--tRNA ligase 1 from Alkaliphilus oremlandii (strain OhILAs) (Clostridium oremlandii (strain OhILAs)).